The following is a 443-amino-acid chain: Probable glycine dehydrogenase (decarboxylating) subunit 1 (443 aa).

This sequence belongs to the GcvP family. N-terminal subunit subfamily. The glycine cleavage system is composed of four proteins: P, T, L and H. In this organism, the P 'protein' is a heterodimer of two subunits.

The enzyme catalyses N(6)-[(R)-lipoyl]-L-lysyl-[glycine-cleavage complex H protein] + glycine + H(+) = N(6)-[(R)-S(8)-aminomethyldihydrolipoyl]-L-lysyl-[glycine-cleavage complex H protein] + CO2. The glycine cleavage system catalyzes the degradation of glycine. The P protein binds the alpha-amino group of glycine through its pyridoxal phosphate cofactor; CO(2) is released and the remaining methylamine moiety is then transferred to the lipoamide cofactor of the H protein. This is Probable glycine dehydrogenase (decarboxylating) subunit 1 from Oleidesulfovibrio alaskensis (strain ATCC BAA-1058 / DSM 17464 / G20) (Desulfovibrio alaskensis).